Reading from the N-terminus, the 247-residue chain is uncharacterized protein (247 aa).

This is an uncharacterized protein from Cryphonectria parasitica (Chestnut blight fungus).